We begin with the raw amino-acid sequence, 767 residues long: Transferrin receptor protein 1 (767 aa).

Residues 1 to 67 (MDQARSAFSN…LTKPKRFNGS (67 aa)) lie on the Cytoplasmic side of the membrane. 2 positions are modified to phosphoserine: Ser9 and Ser18. Tyr19 bears the Phosphotyrosine mark. An Endocytosis signal motif is present at residues 19–22 (YTRF). Thr20 carries the phosphothreonine modification. Ser23 is subject to Phosphoserine. A Stop-transfer sequence motif is present at residues 60–63 (KPKR). A helical; Signal-anchor for type II membrane protein transmembrane segment spans residues 68 to 88 (FCYAVIAVIIFFLIGFMIGYL). Cys69 is lipidated: S-palmitoyl cysteine. At 89-767 (GYCKRVEPKS…GDIWDIDNEF (679 aa)) the chain is on the extracellular side. A compositionally biased stretch (basic and acidic residues) spans 96 to 110 (PKSECGRSGDSKEIE). Positions 96-122 (PKSECGRSGDSKEIEGTEPPETEEYFP) are disordered. Residues 111 to 121 (GTEPPETEEYF) are compositionally biased toward acidic residues. N-linked (GlcNAc...) asparagine glycosylation is found at Asn211, Asn258, and Asn324. The PA domain maps to 230–320 (SKATTVTGKL…GTGDPYTPGF (91 aa)). The tract at residues 576 to 767 (TMDTYEVLSQ…GDIWDIDNEF (192 aa)) is ligand-binding. A Cell attachment site motif is present at residues 653–655 (RGD). Asn734 carries an N-linked (GlcNAc...) asparagine glycan.

The protein belongs to the peptidase M28 family. M28B subfamily. In terms of assembly, homodimer; disulfide-linked. Binds one transferrin or HFE molecule per subunit. Interacts with SH3BP4. Interacts with STEAP3; facilitates TFRC endocytosis in erythroid precursor cells. Post-translationally, stearoylated by ZDHHC6 which inhibits TFRC-mediated activation of the JNK pathway and promotes mitochondrial fragmentation. Stearoylation does not affect iron uptake.

It localises to the cell membrane. Its subcellular location is the melanosome. In terms of biological role, cellular uptake of iron occurs via receptor-mediated endocytosis of ligand-occupied transferrin receptor into specialized endosomes. Endosomal acidification leads to iron release. The apotransferrin-receptor complex is then recycled to the cell surface with a return to neutral pH and the concomitant loss of affinity of apotransferrin for its receptor. Transferrin receptor is necessary for development of erythrocytes and the nervous system. Positively regulates T and B cell proliferation through iron uptake. Acts as a lipid sensor that regulates mitochondrial fusion by regulating activation of the JNK pathway. When dietary levels of stearate (C18:0) are low, promotes activation of the JNK pathway, resulting in HUWE1-mediated ubiquitination and subsequent degradation of the mitofusin MFN2 and inhibition of mitochondrial fusion. When dietary levels of stearate (C18:0) are high, TFRC stearoylation inhibits activation of the JNK pathway and thus degradation of the mitofusin MFN2. Mediates uptake of NICOL1 into fibroblasts where it may regulate extracellular matrix production. The protein is Transferrin receptor protein 1 (TFRC) of Equus caballus (Horse).